Consider the following 298-residue polypeptide: Hydroxymethylglutaryl-CoA lyase, mitochondrial (298 aa).

In terms of domain architecture, Pyruvate carboxyltransferase spans 6–273; the sequence is VKVVEVGPRD…HTGVDLQKLM (268 aa). Arg-14 serves as a coordination point for substrate. Residue Asp-15 coordinates a divalent metal cation. An N6-acetyllysine modification is found at Lys-21. A divalent metal cation contacts are provided by His-206 and His-208. The active site involves Cys-239. Asn-248 is an a divalent metal cation binding site. A Microbody targeting signal motif is present at residues 296–298; it reads CRL.

This sequence belongs to the HMG-CoA lyase family. As to quaternary structure, homodimer; disulfide-linked. Can also form homotetramers.

The protein resides in the mitochondrion matrix. It is found in the peroxisome. It catalyses the reaction (3S)-3-hydroxy-3-methylglutaryl-CoA = acetoacetate + acetyl-CoA. It functions in the pathway metabolic intermediate metabolism; (S)-3-hydroxy-3-methylglutaryl-CoA degradation; acetoacetate from (S)-3-hydroxy-3-methylglutaryl-CoA: step 1/1. Functionally, mitochondrial 3-hydroxy-3-methylglutaryl-CoA lyase that catalyzes a cation-dependent cleavage of (S)-3-hydroxy-3-methylglutaryl-CoA into acetyl-CoA and acetoacetate, a key step in ketogenesis. Terminal step in leucine catabolism. Ketone bodies (beta-hydroxybutyrate, acetoacetate and acetone) are essential as an alternative source of energy to glucose, as lipid precursors and as regulators of metabolism. The polypeptide is Hydroxymethylglutaryl-CoA lyase, mitochondrial (HMGCL) (Gallus gallus (Chicken)).